The sequence spans 312 residues: Lipoyl synthase (312 aa).

Residues 1–10 (MNEAPAEKQK) show a composition bias toward basic and acidic residues. The segment at 1-20 (MNEAPAEKQKPQQGKRFSER) is disordered. Positions 51, 56, 62, 77, 81, 84, and 290 each coordinate [4Fe-4S] cluster. The Radical SAM core domain occupies 63 to 280 (WSRKTATYLA…RSVGESLGLF (218 aa)).

Belongs to the radical SAM superfamily. Lipoyl synthase family. [4Fe-4S] cluster serves as cofactor.

The protein localises to the cytoplasm. It catalyses the reaction [[Fe-S] cluster scaffold protein carrying a second [4Fe-4S](2+) cluster] + N(6)-octanoyl-L-lysyl-[protein] + 2 oxidized [2Fe-2S]-[ferredoxin] + 2 S-adenosyl-L-methionine + 4 H(+) = [[Fe-S] cluster scaffold protein] + N(6)-[(R)-dihydrolipoyl]-L-lysyl-[protein] + 4 Fe(3+) + 2 hydrogen sulfide + 2 5'-deoxyadenosine + 2 L-methionine + 2 reduced [2Fe-2S]-[ferredoxin]. The protein operates within protein modification; protein lipoylation via endogenous pathway; protein N(6)-(lipoyl)lysine from octanoyl-[acyl-carrier-protein]: step 2/2. Its function is as follows. Catalyzes the radical-mediated insertion of two sulfur atoms into the C-6 and C-8 positions of the octanoyl moiety bound to the lipoyl domains of lipoate-dependent enzymes, thereby converting the octanoylated domains into lipoylated derivatives. The sequence is that of Lipoyl synthase from Chlamydia felis (strain Fe/C-56) (Chlamydophila felis).